A 2172-amino-acid chain; its full sequence is MTNLGGGGAEEQARLKQYGYKVNSSLVLNSDERRRDTHESSGEPESLRGRIDPKSFGDRVVRGRPHELDERLNKSKKKKERCDDLVSARESKRVRLREVSVLNDTEDGVYQPKTKETRVAFEIMLGLIQQQLGGQPLDIVCGAADEILAVLKNESVKNHEKKVEIEKLLNVITDQVFSQFVSIGKLITDYEEGGDSLSGKASEDGGLDYDIGVALECEEDDDESDLDMVQDEKDEEDEDVVELNKTGVVQVGVAINGEDARQAKEDTSLNVLDIDAYWLQRKISQEYEQKIDAQECQELAEELLKILAEGNDRDVEIKLLEHLQFEKFSLVKFLLQNRLKVVWCTRLARGRDQEERNQIEEEMLGLGSELAAIVKELHAKRATAKEREEKREKDIKEEAQHLMDDDSGVDGDRGMRDVDDLDLENGWLKGQRQVMDLESLAFNQGGFTRENNKCELPDRSFRIRGKEFDEVHVPWVSKKFDSNEKLVKISDLPEWAQPAFRGMQQLNRVQSKVYGTALFKADNILLCAPTGAGKTNVAVLTILHQLGLNMNPGGTFNHGNYKIVYVAPMKALVAEVVDSLSQRLKDFGVTVKELSGDQSLTGQEIKETQIIVTTPEKWDIITRKSGDRTYTQLVRLLIIDEIHLLDDNRGPVLESIVARTLRQIESTKEHIRLVGLSATLPNCDDVASFLRVDLKNGLFIFDRSYRPVPLGQQYIGINVKKPLRRFQLMNDICYQKVVAVAGKHQVLIFVHSRKETAKTARAIRDTAMANDTLSRFLKEDSQSREILKCLAGLLKNNDLKELLPYGFAIHHAGLTRTDREIVENQFRWGNLQVLISTATLAWGVNLPAHTVIIKGTQVYNPERGEWMELSPLDVMQMIGRAGRPQYDQQGEGIIITGYSKLQYYLRLMNEQLPIESQFISKLADQLNAEIVLGTIQNAREACHWLGYTYLYVRMVRNPTLYGVSPDALAKDLLLEERRADLIHSAATILDKNNLIKYDRKSGHFQVTDLGRIASYYYISHGTIAAYNENLKPTMNDIELCRLFSLSEEFKYVTVRQDEKMELAKLLDRVPIPVKETLEDPSAKINVLLQVYISKLKLEGLSLTSDMVYITQSAGRLLRAIFEIVLKRGWAQLSQKALNLSKMVGKRMWSVQTPLWQFPGIPKEILMKLEKNDLVWERYYDLSSQELGELICNPKMGRPLHKYIHQFPKLKLAAHVQPISRSVLQVELTVTPDFHWDDKANKYVEPFWIIVEDNDGEKILHHEYFLFKKRVIDEDHTLNFTVPISEPIPPQYFIRVVSDKWLDSPTVLPVSFRHLILPEKYPPPTELLDLQPLPVMALRNPSYETLYQDFKHFNPVQTQVFTVLYNTSDNVVVAAPTGSGKTICAEFAILRNHLEGPDSAMRVVYIAPLEAIAKEQFRDWEKKFGKGLGLRVVELTGETLLDLKLLEKGQIIISTPEKWDALSRRWKQRKYIQQVSLFIVDELHLIGGQGGQVLEVIVSRMRYISSQVGNKIRIVALSTSLANAKDLGEWIGASSCGVFNFPPNVRPVPLEIHIHGVDILSFEARMQAMTKPTYTAIVQHAKNKKPAIVFVPTRKHVRLTAVDLIAYSHMDNMKSPDFLLGNLEELEPFLIQICEETLKETLRHGIGYLHEGLSNLDQEIVTQLFEAGRIQVCVMSSSLCWGTPLKAHLVVVMGTHFYDGRENSHSDYPISNLLQMMGRGSRPLLDDAGKCVIFCHAPRKEYYKKFLYEALPVESHLQHFLHDNFNAEVVARVIENKQDAVDYLTWSFMYRRLPQNPNYYNLLGVSHRHLSDHLSELVENTLSDLEVSKCIEIDNELDLSPLNLGMIASYYYINYTTIERFSSLLASKTKMKGLLEILTSASEYDLIPIRPGEEDAVRRLINHQRFSFQNPRCTDPRVKTSALLQAHFSRQKISGNLVMDQCEVLLSATRLLQAMVDVISSNGCLNLALLAMEVSQMVTQGMWDRDSMLLQLPHFTKDLAKRCHENPGNNIETIFDLVEMEDDKRQELLQMSDAQLLDIARFCNRFPNIDLTYEIVGSNEVSPGKDITLQVLLERDMEGRTEVGPVDAPRYPKTKEEGWWLVVGEAKTNQLMAIKRISLQRKAQVKLEFAVPTETGEKSYTLYFMCDSYLGCDQEYSFTVDVKDSDAADHMEE.

Residues 20–83 (YKVNSSLVLN…KSKKKKERCD (64 aa)) are disordered. The segment covering 30–73 (SDERRRDTHESSGEPESLRGRIDPKSFGDRVVRGRPHELDERLN) has biased composition (basic and acidic residues). The 184-residue stretch at 515–698 (GTALFKADNI…FLRVDLKNGL (184 aa)) folds into the Helicase ATP-binding 1 domain. Residue 528–535 (APTGAGKT) coordinates ATP. The short motif at 640–643 (DEIH) is the DEIH box element. The Helicase C-terminal 1 domain occupies 742-946 (GKHQVLIFVH…NAREACHWLG (205 aa)). An SEC63 1 domain is found at 1007 to 1308 (TDLGRIASYY…KWLDSPTVLP (302 aa)). The Helicase ATP-binding 2 domain maps to 1361–1538 (TVLYNTSDNV…WIGASSCGVF (178 aa)). Residue 1374 to 1381 (APTGSGKT) participates in ATP binding. The short motif at 1480–1483 (DELH) is the DELH box element. The 198-residue stretch at 1575-1772 (AIVQHAKNKK…NFNAEVVARV (198 aa)) folds into the Helicase C-terminal 2 domain. The region spanning 1840-2157 (PLNLGMIASY…YLGCDQEYSF (318 aa)) is the SEC63 2 domain.

The protein resides in the nucleus. The enzyme catalyses ATP + H2O = ADP + phosphate + H(+). In terms of biological role, RNA helicase that plays an essential role in pre-mRNA splicing as component of the U5 snRNP and U4/U6-U5 tri-snRNP complexes. Involved in spliceosome assembly, activation and disassembly. The protein is DExH-box ATP-dependent RNA helicase DExH13 of Arabidopsis thaliana (Mouse-ear cress).